The primary structure comprises 304 residues: NAD kinase (304 aa).

The active-site Proton acceptor is aspartate 77. Residues 77–78 (DG), arginine 82, 151–152 (NE), arginine 162, aspartate 181, and 192–197 (TAYSFS) each bind NAD(+).

The protein belongs to the NAD kinase family. A divalent metal cation is required as a cofactor.

It localises to the cytoplasm. The enzyme catalyses NAD(+) + ATP = ADP + NADP(+) + H(+). In terms of biological role, involved in the regulation of the intracellular balance of NAD and NADP, and is a key enzyme in the biosynthesis of NADP. Catalyzes specifically the phosphorylation on 2'-hydroxyl of the adenosine moiety of NAD to yield NADP. In Leifsonia xyli subsp. xyli (strain CTCB07), this protein is NAD kinase.